A 252-amino-acid polypeptide reads, in one-letter code: 5'-nucleotidase SurE (252 aa).

A divalent metal cation-binding residues include Asp8, Asp9, Ser39, and Asn95.

It belongs to the SurE nucleotidase family. The cofactor is a divalent metal cation.

It is found in the cytoplasm. The enzyme catalyses a ribonucleoside 5'-phosphate + H2O = a ribonucleoside + phosphate. Nucleotidase that shows phosphatase activity on nucleoside 5'-monophosphates. In Clostridium botulinum (strain 657 / Type Ba4), this protein is 5'-nucleotidase SurE.